The sequence spans 304 residues: tRNA pseudouridine synthase B (304 aa).

The active-site Nucleophile is the aspartate 47. The tract at residues 85-105 is disordered; the sequence is TNTDDGEGEVTETSDARPSDD.

It belongs to the pseudouridine synthase TruB family. Type 1 subfamily.

The enzyme catalyses uridine(55) in tRNA = pseudouridine(55) in tRNA. Its function is as follows. Responsible for synthesis of pseudouridine from uracil-55 in the psi GC loop of transfer RNAs. This Dinoroseobacter shibae (strain DSM 16493 / NCIMB 14021 / DFL 12) protein is tRNA pseudouridine synthase B.